We begin with the raw amino-acid sequence, 695 residues long: NAD(P)H-quinone oxidoreductase subunit 5, chloroplastic (695 aa).

15 helical membrane-spanning segments follow: residues 1-21 (WIIP…LILF), 32-52 (WAFQ…YLSI), 81-101 (IDPL…MVLI), 117-137 (FAYM…SNLI), 139-159 (IYIF…FWFT), 177-197 (GDFG…SFEF), 211-231 (NEVN…GAVA), 250-270 (TPIS…FLVA), 278-298 (VIPY…LLGA), 319-339 (LGYM…FHLI), 346-366 (ALLF…VGYS), 388-408 (ITFL…CFWS), 417-437 (WLYS…TAFY), 535-555 (LFPI…GIPF), and 594-614 (VLSV…YKPI).

Belongs to the complex I subunit 5 family. As to quaternary structure, NDH is composed of at least 16 different subunits, 5 of which are encoded in the nucleus.

It is found in the plastid. The protein resides in the chloroplast thylakoid membrane. The catalysed reaction is a plastoquinone + NADH + (n+1) H(+)(in) = a plastoquinol + NAD(+) + n H(+)(out). It catalyses the reaction a plastoquinone + NADPH + (n+1) H(+)(in) = a plastoquinol + NADP(+) + n H(+)(out). In terms of biological role, NDH shuttles electrons from NAD(P)H:plastoquinone, via FMN and iron-sulfur (Fe-S) centers, to quinones in the photosynthetic chain and possibly in a chloroplast respiratory chain. The immediate electron acceptor for the enzyme in this species is believed to be plastoquinone. Couples the redox reaction to proton translocation, and thus conserves the redox energy in a proton gradient. In Capsicum baccatum (Peruvian pepper), this protein is NAD(P)H-quinone oxidoreductase subunit 5, chloroplastic (ndhF).